A 292-amino-acid chain; its full sequence is NAC domain-containing protein 105 (292 aa).

The region spanning 12-162 (IPPGFRFHPT…GWVVCRAFKK (151 aa)) is the NAC domain. The DNA-binding element occupies 112–168 (IGMRKTLVFYRGRAPNGQKSDWIIHEYYSLESHQNSPPQEEGWVVCRAFKKRTTIPT). Positions 237–259 (LPQLESPSLPSEITPHSTTFSEN) are enriched in polar residues. Positions 237 to 269 (LPQLESPSLPSEITPHSTTFSENSSRKDDMSSE) are disordered. The segment covering 260 to 269 (SSRKDDMSSE) has biased composition (basic and acidic residues).

This sequence belongs to the plant vascular related NAC-domain protein family. As to quaternary structure, interacts with NAC030/VND7. As to expression, detected in root protoxylem and metaxylem poles and in vessels of protoxylems, outermost metaxylems, inner metaxylems, shoots and hypocotyls. Expressed in roots, hypocotyls, cotyledons and leaves. Present in developing xylems. Present in root developing xylems. Specifically expressed in vessels but not in interfascicular fibers in stems.

It is found in the nucleus. In terms of biological role, transcription activator that binds to the secondary wall NAC binding element (SNBE), 5'-(T/A)NN(C/T)(T/C/G)TNNNNNNNA(A/C)GN(A/C/T)(A/T)-3', in the promoter of target genes. Involved in xylem formation by promoting the expression of secondary wall-associated transcription factors and of genes involved in secondary wall biosynthesis and programmed cell death, genes driven by the secondary wall NAC binding element (SNBE). Triggers thickening of secondary walls. The sequence is that of NAC domain-containing protein 105 from Arabidopsis thaliana (Mouse-ear cress).